The following is a 229-amino-acid chain: Uracil-DNA glycosylase (229 aa).

The Proton acceptor role is filled by Asp-64.

This sequence belongs to the uracil-DNA glycosylase (UDG) superfamily. UNG family.

It is found in the cytoplasm. The enzyme catalyses Hydrolyzes single-stranded DNA or mismatched double-stranded DNA and polynucleotides, releasing free uracil.. Its function is as follows. Excises uracil residues from the DNA which can arise as a result of misincorporation of dUMP residues by DNA polymerase or due to deamination of cytosine. In Escherichia coli O81 (strain ED1a), this protein is Uracil-DNA glycosylase.